The sequence spans 277 residues: Type II restriction enzyme RsrI (277 aa).

It belongs to the EcoRI type II restriction endonuclease family. In terms of assembly, homodimer. Mg(2+) is required as a cofactor.

The enzyme catalyses Endonucleolytic cleavage of DNA to give specific double-stranded fragments with terminal 5'-phosphates.. In terms of biological role, a P subtype restriction enzyme that recognizes the double-stranded sequence 5'-GAATTC-3' and cleaves after G-1. The polypeptide is Type II restriction enzyme RsrI (rsrIR) (Cereibacter sphaeroides (Rhodobacter sphaeroides)).